A 343-amino-acid chain; its full sequence is Dimethyladenosine transferase 1, mitochondrial (343 aa).

The N-terminal 27 residues, methionine 1 to valine 27, are a transit peptide targeting the mitochondrion. 7 residues coordinate S-adenosyl-L-methionine: leucine 38, glycine 63, glutamate 85, lysine 86, aspartate 111, valine 112, and asparagine 141.

This sequence belongs to the class I-like SAM-binding methyltransferase superfamily. rRNA adenine N(6)-methyltransferase family. KsgA subfamily. As to quaternary structure, interacts with mitochondrial RNA polymerase POLRMT. Interacts with TFAM. Bound to the maturing mtSSU until the late stages of assembly.

It localises to the mitochondrion. The catalysed reaction is adenosine(N)/adenosine(N+1) in rRNA + 4 S-adenosyl-L-methionine = N(6)-dimethyladenosine(N)/N(6)-dimethyladenosine(N+1) in rRNA + 4 S-adenosyl-L-homocysteine + 4 H(+). Functionally, S-adenosyl-L-methionine-dependent methyltransferase which specifically dimethylates mitochondrial 12S rRNA at the conserved stem loop. Also required for basal transcription of mitochondrial DNA, probably via its interaction with POLRMT and TFAM. Stimulates transcription independently of the methyltransferase activity. Its function is as follows. Mitochondrial methyltransferase which uses S-adenosyl methionine to dimethylate two highly conserved adjacent adenosine residues (A1583 and A1584) within the loop of helix 45 at the 3-prime end of 12S rRNA, thereby regulating the assembly or stability of the small subunit of the mitochondrial ribosome. Also required for basal transcription of mitochondrial DNA, probably via its interaction with POLRMT and TFAM. Stimulates transcription independently of the methyltransferase activity. The sequence is that of Dimethyladenosine transferase 1, mitochondrial (TFB1M) from Pongo abelii (Sumatran orangutan).